Reading from the N-terminus, the 512-residue chain is Inositol-3-phosphate synthase (512 aa).

NAD(+) is bound by residues G72, G73, N74, N75, D145, I182, Q192, R195, T232, G233, N234, T235, G283, S284, D308, S311, N342, N343, D344, K357, G395, D396, D424, and S425.

This sequence belongs to the myo-inositol 1-phosphate synthase family. Requires NAD(+) as cofactor.

The protein localises to the cytoplasm. It is found in the cytosol. It localises to the nucleus. It catalyses the reaction D-glucose 6-phosphate = 1D-myo-inositol 3-phosphate. It functions in the pathway polyol metabolism; myo-inositol biosynthesis; myo-inositol from D-glucose 6-phosphate: step 1/2. In terms of biological role, key enzyme in myo-inositol biosynthesis pathway that catalyzes the conversion of glucose 6-phosphate to 1-myo-inositol 1-phosphate in a NAD-dependent manner. This Mesembryanthemum crystallinum (Common ice plant) protein is Inositol-3-phosphate synthase.